The chain runs to 295 residues: Gamma-glutamyl-L-1-hydroxyisopropylamide hydrolase (295 aa).

Residues 5–221 enclose the Glutamine amidotransferase type-1 domain; it reads RILICDGNTE…LRESARSLVE (217 aa). Residue Cys-104 is the Nucleophile of the active site. Active-site residues include His-200 and Glu-202.

It carries out the reaction gamma-L-glutamyl-L-alaninol + H2O = L-alaninol + L-glutamate. In terms of biological role, involved in the degradation of isopropylamine, which is a constituent of the herbicides atrazine. Catalyzes the hydrolysis of gamma-glutamyl-L-alaninol (GALO) to L-alaninol and L-glutamate. It can also uses gamma-glutamyl-isopropylamide, gamma-glutamyl-ethylamide, L-glutamine, and gamma-glutamyl-p-nitroanilide. This is Gamma-glutamyl-L-1-hydroxyisopropylamide hydrolase (ipuF) from Pseudomonas sp.